A 499-amino-acid polypeptide reads, in one-letter code: MINKKISLGVLSILTAFSLQSVSYACTGFIIGKDLTKDGSLLXGRTEDLEPHHNKNFIVRLAKDNPAGEKWKDLSNGFEYPLPEHSYRYSAIPDVTPNKGVYDEAGFNECGVSMSATVSASANDAIQKIDPYVKNGLAESSMASVILPSVKTAREGVALIAKIVTEKGAAEGNIVTLADKDGIWYMEILSGHQYVAIKFPDDKYAVFPNTFYLGHVDFNDKENTIASEDVEKVAKKAKSYIEVDGKFHIAKSYNPPLNDANRSRSFSGIKSLDPDSKVTYKDSNYELLQSTDKTFSLEDAMKLQRNRFEGLDLKPLDQMALDGKGKPKSKKAVKGYAYPISNPNVMEAHIFQLKKDIPAELGGGVMWLSIGSPRNAPYLPYLGNISRTYEAYQEKSTQYNDKSWYWTVSHINDLVAAHPKPFGTKVIDEIKGLEKTWIAEQDKTTKEISDLVVSDPKAAQEKADKISLDRAEKTFKRLKAIEAKLVKEKPKNKKGLNRS.

Cys-26 is a catalytic residue.

Belongs to the peptidase C69 family.

The catalysed reaction is an L-aminoacyl-L-amino acid + H2O = 2 an L-alpha-amino acid. The sequence is that of Probable dipeptidase B (pepDB) from Streptococcus pyogenes serotype M6 (strain ATCC BAA-946 / MGAS10394).